Consider the following 260-residue polypeptide: D-threitol dehydrogenase (260 aa).

Position 21 to 50 (21 to 50 (LVTGAASGIGAAIASAYATKGARIAAVDLN)) interacts with NAD(+). Tyr166 (proton acceptor) is an active-site residue. Lys170 is a binding site for NAD(+).

This sequence belongs to the short-chain dehydrogenases/reductases (SDR) family.

It catalyses the reaction D-threitol + NAD(+) = D-erythrulose + NADH + H(+). The protein operates within carbohydrate metabolism; D-threitol degradation. In terms of biological role, catalyzes the NAD-dependent reversible oxidation of D-threitol. Involved in the degradation pathway of D-threitol, that allows M.smegmatis to grow on this compound as the sole carbon source. Does not catalyze the oxidation of xylitol, L-sorbitol, and L-sorbose. The polypeptide is D-threitol dehydrogenase (Mycolicibacterium smegmatis (strain ATCC 700084 / mc(2)155) (Mycobacterium smegmatis)).